Here is a 387-residue protein sequence, read N- to C-terminus: Phosphoglycerate kinase (387 aa).

Substrate-binding positions include 21–23 (DLN), R36, and 59–62 (HLGR). N6-acetyllysine is present on K84. Substrate contacts are provided by R113 and R146. ATP is bound by residues K197, E314, and 340-343 (GGDT).

It belongs to the phosphoglycerate kinase family. In terms of assembly, monomer.

Its subcellular location is the cytoplasm. The enzyme catalyses (2R)-3-phosphoglycerate + ATP = (2R)-3-phospho-glyceroyl phosphate + ADP. It participates in carbohydrate degradation; glycolysis; pyruvate from D-glyceraldehyde 3-phosphate: step 2/5. The chain is Phosphoglycerate kinase from Escherichia coli O9:H4 (strain HS).